We begin with the raw amino-acid sequence, 232 residues long: LRRN4 C-terminal-like protein (232 aa).

The first 22 residues, 1-22 (MPHSPCLLWLLAVTSLVPGTQP), serve as a signal peptide directing secretion. Over 23–189 (LVAGDLEGDE…RLTVPPRPLT (167 aa)) the chain is Extracellular. The Fibronectin type-III domain maps to 77–172 (PPHPPRLGEV…GAEGLDSADG (96 aa)). Asn127 carries an N-linked (GlcNAc...) asparagine glycan. Residues 190-210 (LLHAAMGVGSALALLSCSALV) traverse the membrane as a helical segment. Residues 211-232 (WHFCLRQRWGCPRRGRPSHAGL) lie on the Cytoplasmic side of the membrane.

The protein localises to the membrane. This is LRRN4 C-terminal-like protein (LRRN4CL) from Bos taurus (Bovine).